The chain runs to 283 residues: Pantothenate synthetase (283 aa).

An ATP-binding site is contributed by 30-37 (MGCLHEGH). The active-site Proton donor is His-37. Gln-61 provides a ligand contact to (R)-pantoate. Gln-61 provides a ligand contact to beta-alanine. 147-150 (GQKD) is an ATP binding site. Gln-153 contributes to the (R)-pantoate binding site. ATP is bound by residues Val-176 and 184 to 187 (KSSR).

It belongs to the pantothenate synthetase family. Homodimer.

It localises to the cytoplasm. The enzyme catalyses (R)-pantoate + beta-alanine + ATP = (R)-pantothenate + AMP + diphosphate + H(+). The protein operates within cofactor biosynthesis; (R)-pantothenate biosynthesis; (R)-pantothenate from (R)-pantoate and beta-alanine: step 1/1. Functionally, catalyzes the condensation of pantoate with beta-alanine in an ATP-dependent reaction via a pantoyl-adenylate intermediate. This chain is Pantothenate synthetase, found in Clostridium novyi (strain NT).